Consider the following 133-residue polypeptide: Type III secretion protein HrcQb (133 aa).

Residues 1–21 (MSTEDLYQDDVEMLDDYEEPV) are compositionally biased toward acidic residues. Residues 1–60 (MSTEDLYQDDVEMLDDYEEPVPEQADQQQRDDEYAEHAFGYADSDAEHEEQSGDHHESPM) form a disordered region. Residues 49 to 59 (EEQSGDHHESP) show a composition bias toward basic and acidic residues.

The protein belongs to the FliN/MopA/SpaO family. In terms of assembly, homotetramer. The four monomers assemble into two tightly bound homodimers. Interacts with HrcQa.

It localises to the cytoplasm. Component of the type III secretion system, which is required for effector protein delivery, parasitism, and pathogenicity. Probably participates in the formation of a C-ring-like assembly along with HrcQa. This Pseudomonas syringae pv. syringae protein is Type III secretion protein HrcQb (hrcQb).